A 98-amino-acid chain; its full sequence is Large ribosomal subunit protein bL28 (98 aa).

The protein belongs to the bacterial ribosomal protein bL28 family.

The polypeptide is Large ribosomal subunit protein bL28 (Thermus thermophilus (strain ATCC BAA-163 / DSM 7039 / HB27)).